We begin with the raw amino-acid sequence, 701 residues long: MFEFLVTTSKGLDELLAQEITKLCPQLSVKTKPGQVLFTGEIEQAYKICLWSRLANRVMLKLADGHVDSADDVYQITSSVNWTSHFSVNSTFVVDFVGASHCINNSQFGALKIKDAVVDQFNELFESRPSVSKIEPDIRIQGRMWSDKLTVYLDLSGSSLHQRHYRTKTGLAPVKEHIACAMLVRSGWANDQQAPLVDPMCGAGTIAIEAALMAANIAPALKRERWGFTRWLQHDATLWQSLLDDANAQIITPNCVISASDIDHGVVSIAKENADAAGVFSGIKFNTIDACKVIPPKGHTKGYIVSNPPYGERLSEITALLPLFQAWGTSLKEHFKGWNLSLLTSNRDLLRSMKMFAHKEYKLMNGKLECQLVNFALDEKNCITRETSLSNNDFANRLNKNIKRLSKWLKSENTNCYRIYDADLPEYNVAIDRYGDWLVVQEYAAPKNVPEAKAKRRLHEVIVALPQVVDVPAEQIVMKVRAQQKGKSQYEKVSQKQKMLEVFENGAKFKLNLTDYLDTGLFLDHRVTRQLVQQRVKDKDVLNLFAYTGSVSVHAALGKAKSVTTVDMSNTYVDWAKENFALNKLKGPYEFIQADCLTWLERHNNQYDFIFIDPPSFSNSKRMDTTWDVQRDHVALLRNAVKCLRPGGEIMFSNNLRQFKLDEEGVSQLGLTIQDITQKTLPEDFKRNPKIHGCWVLTLNA.

In terms of domain architecture, THUMP spans 44 to 155 (QAYKICLWSR…SDKLTVYLDL (112 aa)).

This sequence belongs to the methyltransferase superfamily. RlmKL family.

It is found in the cytoplasm. The enzyme catalyses guanosine(2445) in 23S rRNA + S-adenosyl-L-methionine = N(2)-methylguanosine(2445) in 23S rRNA + S-adenosyl-L-homocysteine + H(+). The catalysed reaction is guanosine(2069) in 23S rRNA + S-adenosyl-L-methionine = N(2)-methylguanosine(2069) in 23S rRNA + S-adenosyl-L-homocysteine + H(+). In terms of biological role, specifically methylates the guanine in position 2445 (m2G2445) and the guanine in position 2069 (m7G2069) of 23S rRNA. The polypeptide is Ribosomal RNA large subunit methyltransferase K/L (Pseudoalteromonas atlantica (strain T6c / ATCC BAA-1087)).